The chain runs to 474 residues: MTKKLHIKTWGCQMNEYDSSKMADLLNSTHGYTLTEQAEDADVLLLNTCSIREKAQEKVFALLGRWKKLKESNPDMIIGVGGCVASQEGAQIRQRASCVDIVFGPQTLHRLPEMINSVRGTRSPVVDVSFPEIEKFDRMPEPRADGPTAFVSIMEGCNKYCTFCVVPYTRGEEVSRPSDDILFEVAQLAAQGVREVNLLGQNVNAYRGETFDGGICSFAELLRLVAAIDGIDRIRFTTSHPIEFNDDIIDVYRDTPELVSFLHLPVQSGADRILTLMKRAHTALEYKAIIRKLLAARPNIQISSDFIIGFPGETQADFEQTMKLIGEINFDISYSFIYSARPGTPAADLPDDVSEDEKKQRLYILQDRINQQTTAWSRRKLGTVQRILVEGTSRKNVMELSGRTECNRVVNFEGSPEHIGKFVDVEITDVYANSLRGMLLRGEHQMALRTLETPASVIERTRKENELGVATWLP.

The MTTase N-terminal domain maps to 3–120; the sequence is KKLHIKTWGC…LPEMINSVRG (118 aa). [4Fe-4S] cluster is bound by residues cysteine 12, cysteine 49, cysteine 83, cysteine 157, cysteine 161, and cysteine 164. The region spanning 143 to 375 is the Radical SAM core domain; that stretch reads RADGPTAFVS…QDRINQQTTA (233 aa). The 64-residue stretch at 378 to 441 folds into the TRAM domain; sequence RRKLGTVQRI…ANSLRGMLLR (64 aa).

This sequence belongs to the methylthiotransferase family. MiaB subfamily. As to quaternary structure, monomer. Requires [4Fe-4S] cluster as cofactor.

It localises to the cytoplasm. It carries out the reaction N(6)-dimethylallyladenosine(37) in tRNA + (sulfur carrier)-SH + AH2 + 2 S-adenosyl-L-methionine = 2-methylsulfanyl-N(6)-dimethylallyladenosine(37) in tRNA + (sulfur carrier)-H + 5'-deoxyadenosine + L-methionine + A + S-adenosyl-L-homocysteine + 2 H(+). In terms of biological role, catalyzes the methylthiolation of N6-(dimethylallyl)adenosine (i(6)A), leading to the formation of 2-methylthio-N6-(dimethylallyl)adenosine (ms(2)i(6)A) at position 37 in tRNAs that read codons beginning with uridine. The protein is tRNA-2-methylthio-N(6)-dimethylallyladenosine synthase of Erwinia tasmaniensis (strain DSM 17950 / CFBP 7177 / CIP 109463 / NCPPB 4357 / Et1/99).